We begin with the raw amino-acid sequence, 190 residues long: Peptide methionine sulfoxide reductase A2-2 (190 aa).

The segment at 1 to 20 (MSNDTGADGGAANPDLGPDA) is disordered. A compositionally biased stretch (low complexity) spans 10-20 (GAANPDLGPDA).

This sequence belongs to the MsrA Met sulfoxide reductase family.

The protein localises to the cytoplasm. It localises to the cytosol. The enzyme catalyses L-methionyl-[protein] + [thioredoxin]-disulfide + H2O = L-methionyl-(S)-S-oxide-[protein] + [thioredoxin]-dithiol. It carries out the reaction [thioredoxin]-disulfide + L-methionine + H2O = L-methionine (S)-S-oxide + [thioredoxin]-dithiol. Its function is as follows. Catalyzes the reduction of methionine sulfoxide (MetSO) to methionine in proteins. Plays a protective role against oxidative stress by restoring activity to proteins that have been inactivated by methionine oxidation. MSRA family specifically reduces the MetSO S-enantiomer. The sequence is that of Peptide methionine sulfoxide reductase A2-2 (MSRA2-2) from Oryza sativa subsp. japonica (Rice).